The chain runs to 151 residues: Chaperonin GroEL (151 aa).

Position 41–45 (41–45 (DGTTT)) interacts with ATP.

This sequence belongs to the chaperonin (HSP60) family. As to quaternary structure, forms a cylinder of 14 subunits composed of two heptameric rings stacked back-to-back. Interacts with the co-chaperonin GroES.

It localises to the cytoplasm. The catalysed reaction is ATP + H2O + a folded polypeptide = ADP + phosphate + an unfolded polypeptide.. Together with its co-chaperonin GroES, plays an essential role in assisting protein folding. The GroEL-GroES system forms a nano-cage that allows encapsulation of the non-native substrate proteins and provides a physical environment optimized to promote and accelerate protein folding. The chain is Chaperonin GroEL from Mycobacterium avium.